The chain runs to 104 residues: Large ribosomal subunit protein bL21 (104 aa).

The protein belongs to the bacterial ribosomal protein bL21 family. Part of the 50S ribosomal subunit. Contacts protein L20.

Functionally, this protein binds to 23S rRNA in the presence of protein L20. This Elusimicrobium minutum (strain Pei191) protein is Large ribosomal subunit protein bL21.